A 47-amino-acid polypeptide reads, in one-letter code: PhoP/PhoQ regulator MgrB (47 aa).

A helical transmembrane segment spans residues 6-26 (WVALVVVVLACLLLWAQVFNM).

The protein belongs to the MgrB family. As to quaternary structure, may form homooligomers. Probably interacts with the periplasmic domain of PhoQ.

Its subcellular location is the cell inner membrane. PhoP-regulated transcription is redox-sensitive, being activated when the periplasm becomes more reducing. MgrB acts between DsbA/DsbB and PhoP/PhoQ in this pathway. Represses PhoP/PhoQ signaling, possibly by binding to the periplasmic domain of PhoQ, altering its activity and that of downstream effector PhoP. This Escherichia coli O127:H6 (strain E2348/69 / EPEC) protein is PhoP/PhoQ regulator MgrB.